The following is a 117-amino-acid chain: Large ribosomal subunit protein bL20 (117 aa).

The protein belongs to the bacterial ribosomal protein bL20 family.

In terms of biological role, binds directly to 23S ribosomal RNA and is necessary for the in vitro assembly process of the 50S ribosomal subunit. It is not involved in the protein synthesizing functions of that subunit. This chain is Large ribosomal subunit protein bL20, found in Campylobacter jejuni subsp. jejuni serotype O:6 (strain 81116 / NCTC 11828).